Here is a 403-residue protein sequence, read N- to C-terminus: PP2A regulatory subunit TAP46 (403 aa).

2 disordered regions span residues 158–184 and 351–403; these read ERRG…LDDD and ANSS…TPCG. Acidic residues-rich tracts occupy residues 174-184 and 366-375; these read ETEEDDVLDDD and EDDEEDDDDA. Over residues 376–391 the composition is skewed to basic and acidic residues; the sequence is AQDKARAWDDWKDDNP.

It belongs to the IGBP1/TAP42 family. As to quaternary structure, interacts with NPP4 and NPP5, two catalytic subunits (subunit C) of PP2A.

It is found in the cytoplasm. Its subcellular location is the nucleus. Functionally, involved in the regulation of the TOR signaling pathway. Seems to act as a regulator of PP2A catalytic activity. The chain is PP2A regulatory subunit TAP46 from Nicotiana benthamiana.